A 134-amino-acid chain; its full sequence is uncharacterized protein (134 aa).

2 consecutive transmembrane segments (helical) span residues 16-36 (IFSF…NTKL) and 43-63 (IAYF…IHGT).

Belongs to the plectrovirus ORF5 family.

The protein localises to the host membrane. This is an uncharacterized protein from Spiroplasma citri (SpV1).